The sequence spans 86 residues: Polcalcin Nic t 2 (86 aa).

2 consecutive EF-hand domains span residues 8 to 42 and 43 to 78; these read QDIA…TLGS and VTPE…NRGL. Residues Asp21, Asn23, Asp25, Gln27, Glu32, Asp56, Asn58, Asp60, and Glu67 each coordinate Ca(2+).

The chain is Polcalcin Nic t 2 (Nict2) from Nicotiana tabacum (Common tobacco).